We begin with the raw amino-acid sequence, 509 residues long: Sorting nexin MVP1 (509 aa).

The span at 1-25 (MDTYSGQNGWADTSNASPWGDTNDT) shows a compositional bias: polar residues. Residues 1–28 (MDTYSGQNGWADTSNASPWGDTNDTMPI) are disordered. In terms of domain architecture, PX spans 126-245 (QLDIISIEEI…TFLTVPTDLT (120 aa)). Residues Arg170, Ser172, Lys196, and Arg211 each contribute to the a 1,2-diacyl-sn-glycero-3-phospho-(1D-myo-inositol-3-phosphate) site.

The protein belongs to the sorting nexin family.

The protein resides in the cytoplasm. It is found in the membrane. Functionally, required for vacuolar protein sorting. This Candida glabrata (strain ATCC 2001 / BCRC 20586 / JCM 3761 / NBRC 0622 / NRRL Y-65 / CBS 138) (Yeast) protein is Sorting nexin MVP1 (MVP1).